The chain runs to 445 residues: Zinc finger protein SHOOT GRAVITROPISM 5 (445 aa).

Residues 22–31 (SSSDPFLSSS) are compositionally biased toward low complexity. The disordered stretch occupies residues 22-59 (SSSDPFLSSSENGVTTTNTSTQKRKRRPAGTPDPDAEV). The span at 32–42 (ENGVTTTNTST) shows a compositional bias: polar residues. 3 C2H2-type zinc fingers span residues 73–95 (YICE…RRRH), 115–145 (YVCP…RRKH), and 151–178 (WVCE…TRGH). Positions 153, 156, 169, 173, 180, 182, 195, and 199 each coordinate Zn(2+). The segment at 178 to 201 (HSCDCGRVFSRVESFIEHQDNCSA) adopts a CCHC-type 2; atypical zinc-finger fold. Positions 188–200 (RVESFIEHQDNCS) are SHR-binding. 2 disordered regions span residues 203-253 (RVHR…LEGR) and 281-314 (SSNQ…LNLS). Over residues 214-248 (TAVTVPACSSRTASTVSTPSSETNYGGTVAVTTPQ) the composition is skewed to polar residues. Residues 281-293 (SSNQNPNQENQQQ) show a composition bias toward low complexity. A coiled-coil region spans residues 340–397 (MKIAMKEKAYAEEAKREAKRQREIAENEFANAKKIRQKAQAELERAKFLKEQSMKKIS).

Mainly expressed in the endodermis, the gravity-sensing tissue in inflorescence stems. Mostly present in stems and flowers, and, to a lower extent, in seedlings, hypocotyls, roots and the shoot apical meristem (SAM).

It is found in the nucleus. In terms of biological role, transcription factor involved in inflorescence stems gravitropism, probably by regulating starch accumulation in amyloplasts of graviperceptive cells. Required for stem circumnutation movements. Regulates lateral organ morphogenesis and gravitropic responses. Acts cooperatively with IDD16 to control silique and branche orientation. Involved in the establishment of auxin gradients through the regulation of auxin biosynthesis and transport. The protein is Zinc finger protein SHOOT GRAVITROPISM 5 of Arabidopsis thaliana (Mouse-ear cress).